We begin with the raw amino-acid sequence, 105 residues long: Large ribosomal subunit protein uL24 (105 aa).

It belongs to the universal ribosomal protein uL24 family. In terms of assembly, part of the 50S ribosomal subunit.

Its function is as follows. One of two assembly initiator proteins, it binds directly to the 5'-end of the 23S rRNA, where it nucleates assembly of the 50S subunit. In terms of biological role, one of the proteins that surrounds the polypeptide exit tunnel on the outside of the subunit. The polypeptide is Large ribosomal subunit protein uL24 (Sphingopyxis alaskensis (strain DSM 13593 / LMG 18877 / RB2256) (Sphingomonas alaskensis)).